We begin with the raw amino-acid sequence, 676 residues long: MIDQYKHQQLRIGLVSPQQISAWATKILPNGEIVGEVTKPYTFHYKTNKPEKDGLFCERIFGPIKSGICACGNFRIIGDETEEPKFCEQCAVEFVDSRIRRYQMGYIKLACPVTHVWYLKRLPSYIANFLDKPLKELEGLVYCDFAFARPIAKKPTFLRLRGLFEYEIQSWKYSIPLFFTTQGFDTFRNREISTGASTIREQLADLDLRTILDSSLSEWKEGPTGNEWEDRKVRRRKDFLVRRMELAKHFIRTNIEPEWMVLCLLPVLPPELRPIIQIDGGKLMSSDINELYRRVIYRNNTLTDLLTTSRSTPGELVMCQEKLVQEAVDTLLDNGIRGQPMRDGHNKVYKSFSDVIEGKEGRFRETLLGKRVDYSGRSVIVVGPSLSLHRCGLPREIAIELFQTFVIRGLIRQDLASNIGVAKSKIRENEPIVWEILQEVMRGHPVLLNRAPTLHRLGIQAFQPTLVEGRAICLHPLVCKGFNADFDGDQMAVHVPLSLEAQAEARLLMFSHMNLLSPAIGDPISVPTQDMLIGLYVLTSGNRRGICANRYNPWSRKNYKNEKWNDHNYKYMKEPFFCNSYDAIGAYRQKRINLDSPLWLRWQLDHRVVASREAPIEVHYESLGTYHEIYGNYLIVRSVKKEIIFIYIRTTVGHISFYREIEEAIQGFYRACSYGT.

Positions 69, 71, 87, and 90 each coordinate Zn(2+). The Mg(2+) site is built by aspartate 485, aspartate 487, and aspartate 489.

Belongs to the RNA polymerase beta' chain family. RpoC1 subfamily. In plastids the minimal PEP RNA polymerase catalytic core is composed of four subunits: alpha, beta, beta', and beta''. When a (nuclear-encoded) sigma factor is associated with the core the holoenzyme is formed, which can initiate transcription. The cofactor is Mg(2+). Zn(2+) serves as cofactor.

It localises to the plastid. Its subcellular location is the chloroplast. The enzyme catalyses RNA(n) + a ribonucleoside 5'-triphosphate = RNA(n+1) + diphosphate. Functionally, DNA-dependent RNA polymerase catalyzes the transcription of DNA into RNA using the four ribonucleoside triphosphates as substrates. This is DNA-directed RNA polymerase subunit beta' from Fagopyrum esculentum subsp. ancestrale (Wild buckwheat).